Consider the following 255-residue polypeptide: 5-oxoprolinase subunit A (255 aa).

The protein belongs to the LamB/PxpA family. As to quaternary structure, forms a complex composed of PxpA, PxpB and PxpC.

It catalyses the reaction 5-oxo-L-proline + ATP + 2 H2O = L-glutamate + ADP + phosphate + H(+). Functionally, catalyzes the cleavage of 5-oxoproline to form L-glutamate coupled to the hydrolysis of ATP to ADP and inorganic phosphate. The sequence is that of 5-oxoprolinase subunit A from Campylobacter jejuni subsp. doylei (strain ATCC BAA-1458 / RM4099 / 269.97).